A 318-amino-acid polypeptide reads, in one-letter code: HPr kinase/phosphorylase (318 aa).

Active-site residues include histidine 146 and lysine 167. 161-168 provides a ligand contact to ATP; the sequence is GESGLGKS. Serine 168 serves as a coordination point for Mg(2+). The active-site Proton acceptor; for phosphorylation activity. Proton donor; for dephosphorylation activity is the aspartate 185. The segment at 209–218 is important for the catalytic mechanism of both phosphorylation and dephosphorylation; sequence LEVRGIGLLD. Mg(2+) is bound at residue glutamate 210. Arginine 252 is an active-site residue. The important for the catalytic mechanism of dephosphorylation stretch occupies residues 273–278; it reads QVVAGR.

This sequence belongs to the HPrK/P family. As to quaternary structure, homohexamer. It depends on Mg(2+) as a cofactor.

It carries out the reaction [HPr protein]-L-serine + ATP = [HPr protein]-O-phospho-L-serine + ADP + H(+). It catalyses the reaction [HPr protein]-O-phospho-L-serine + phosphate + H(+) = [HPr protein]-L-serine + diphosphate. Functionally, catalyzes the ATP- as well as the pyrophosphate-dependent phosphorylation of a specific serine residue in HPr, a phosphocarrier protein of the phosphoenolpyruvate-dependent sugar phosphotransferase system (PTS). HprK/P also catalyzes the pyrophosphate-producing, inorganic phosphate-dependent dephosphorylation (phosphorolysis) of seryl-phosphorylated HPr (P-Ser-HPr). The polypeptide is HPr kinase/phosphorylase (Acidovorax sp. (strain JS42)).